The sequence spans 880 residues: Beta-glucosidase 2 (880 aa).

Residues 1-17 (MLLILELLVLIIGLGVA) form the signal peptide. Residues Asn24, Asn77, and Asn271 are each glycosylated (N-linked (GlcNAc...) asparagine). Asp299 is a catalytic residue. N-linked (GlcNAc...) asparagine glycosylation is found at Asn336, Asn343, Asn376, Asn548, Asn589, Asn712, Asn743, and Asn794.

Belongs to the glycosyl hydrolase 3 family.

It catalyses the reaction Hydrolysis of terminal, non-reducing beta-D-glucosyl residues with release of beta-D-glucose.. It functions in the pathway glycan metabolism; cellulose degradation. The chain is Beta-glucosidase 2 (BGL2) from Saccharomycopsis fibuligera (Yeast).